The following is a 106-amino-acid chain: Evasin P1168 (106 aa).

Residues 1–24 (MEVKISTFLQIAVLIVLGIHLIAA) form the signal peptide. Cystine bridges form between Cys45-Cys67, Cys49-Cys69, and Cys60-Cys80. N-linked (GlcNAc...) asparagine glycosylation is found at Asn48, Asn54, and Asn64.

It is found in the secreted. Its function is as follows. Salivary chemokine-binding protein which binds to host chemokines CXCL1, CXCL2 and CXCL8. The polypeptide is Evasin P1168 (Ixodes ricinus (Common tick)).